The primary structure comprises 429 residues: Enolase (429 aa).

Gln162 contributes to the (2R)-2-phosphoglycerate binding site. Glu204 serves as the catalytic Proton donor. Mg(2+) is bound by residues Asp241, Glu288, and Asp315. Residues Lys340, Arg369, Ser370, and Lys391 each contribute to the (2R)-2-phosphoglycerate site. Lys340 (proton acceptor) is an active-site residue.

Belongs to the enolase family. The cofactor is Mg(2+).

The protein localises to the cytoplasm. It is found in the secreted. It localises to the cell surface. The enzyme catalyses (2R)-2-phosphoglycerate = phosphoenolpyruvate + H2O. Its pathway is carbohydrate degradation; glycolysis; pyruvate from D-glyceraldehyde 3-phosphate: step 4/5. Catalyzes the reversible conversion of 2-phosphoglycerate (2-PG) into phosphoenolpyruvate (PEP). It is essential for the degradation of carbohydrates via glycolysis. This Christiangramia forsetii (strain DSM 17595 / CGMCC 1.15422 / KT0803) (Gramella forsetii) protein is Enolase.